The chain runs to 569 residues: Sulfite reductase [NADPH] hemoprotein beta-component (569 aa).

Residues C433, C439, C478, and C482 each coordinate [4Fe-4S] cluster. C482 serves as a coordination point for siroheme.

It belongs to the nitrite and sulfite reductase 4Fe-4S domain family. As to quaternary structure, alpha(8)-beta(8). The alpha component is a flavoprotein, the beta component is a hemoprotein. The cofactor is siroheme. [4Fe-4S] cluster serves as cofactor.

The enzyme catalyses hydrogen sulfide + 3 NADP(+) + 3 H2O = sulfite + 3 NADPH + 4 H(+). The protein operates within sulfur metabolism; hydrogen sulfide biosynthesis; hydrogen sulfide from sulfite (NADPH route): step 1/1. In terms of biological role, component of the sulfite reductase complex that catalyzes the 6-electron reduction of sulfite to sulfide. This is one of several activities required for the biosynthesis of L-cysteine from sulfate. This Blochmanniella floridana protein is Sulfite reductase [NADPH] hemoprotein beta-component.